The following is a 362-amino-acid chain: Mortality factor 4-like protein 1 (362 aa).

One can recognise a Tudor-knot domain in the interval Gln12–Lys51. The segment at Tyr26–Lys62 is interaction with KAT8. Positions Arg113–Thr182 are disordered. Positions Pro133–Val266 are sufficient for interaction with SIN3A. The Nuclear localization signal signature appears at Lys135–Glu146. Lys143 is subject to N6-acetyllysine. The segment at Ser164 to Asp230 is interaction with RB1-1. The sufficient for interaction with PHF12 stretch occupies residues Thr188 to Ala342. Residues Asn191–Val362 form the MRG domain. The interval Leu323–Leu344 is interaction with RB1-2.

As to quaternary structure, component of the NuA4 histone acetyltransferase complex which contains the catalytic subunit KAT5/TIP60 and the subunits EP400, TRRAP/PAF400, BRD8/SMAP, EPC1, DMAP1/DNMAP1, RUVBL1/TIP49, RUVBL2, ING3, actin, ACTL6A/BAF53A, MORF4L1/MRG15, MORF4L2/MRGX, MRGBP, YEATS4/GAS41, VPS72/YL1 and MEAF6. The NuA4 complex interacts with MYC and the adenovirus E1A protein. MORF4L1 may also participate in the formation of NuA4 related complexes which lack the KAT5/TIP60 catalytic subunit, but which include the SWI/SNF related protein SRCAP. Component of the mSin3A histone deacetylase complex, which includes SIN3A, HDAC2, ARID4B, MORF4L1, RBBP4/RbAp48, and RBBP7/RbAp46. May also interact with PHF12 and one or more as yet undefined members of the TLE (transducin-like enhancer of split) family of transcriptional repressors. Component of the SIN3B complex, which includes SIN3B, HDAC2 or HDAC1, PHF12 and MORF4L1. Interacts with RB1 and KAT8. Interacts with the N-terminus of MRFAP1. Found in a complex composed of MORF4L1, MRFAP1 and RB1. Interacts with the entire BRCA complex, which contains BRCA1, PALB2, BRCA2 and RAD51. Interacts with PALB2. Forms a complex with MSL1 and NUPR1.

It is found in the nucleus. Its function is as follows. Component of the NuA4 histone acetyltransferase (HAT) complex which is involved in transcriptional activation of select genes principally by acetylation of nucleosomal histones H4 and H2A. This modification may both alter nucleosome - DNA interactions and promote interaction of the modified histones with other proteins which positively regulate transcription. This complex may be required for the activation of transcriptional programs associated with oncogene and proto-oncogene mediated growth induction, tumor suppressor mediated growth arrest and replicative senescence, apoptosis, and DNA repair. The NuA4 complex ATPase and helicase activities seem to be, at least in part, contributed by the association of RUVBL1 and RUVBL2 with EP400. NuA4 may also play a direct role in DNA repair when directly recruited to sites of DNA damage. As part of the SIN3B complex represses transcription and counteracts the histone acetyltransferase activity of EP300 through the recognition H3K27ac marks by PHF12 and the activity of the histone deacetylase HDAC2. SIN3B complex is recruited downstream of the constitutively active genes transcriptional start sites through interaction with histones and mitigates histone acetylation and RNA polymerase II progression within transcribed regions contributing to the regulation of transcription. Required for homologous recombination repair (HRR) and resistance to mitomycin C (MMC). Involved in the localization of PALB2, BRCA2 and RAD51, but not BRCA1, to DNA-damage foci. The protein is Mortality factor 4-like protein 1 (Morf4l1) of Mus musculus (Mouse).